The chain runs to 132 residues: Small ribosomal subunit protein uS11 (132 aa).

This sequence belongs to the universal ribosomal protein uS11 family. As to quaternary structure, part of the 30S ribosomal subunit. Interacts with proteins S7 and S18. Binds to IF-3.

Located on the platform of the 30S subunit, it bridges several disparate RNA helices of the 16S rRNA. Forms part of the Shine-Dalgarno cleft in the 70S ribosome. The polypeptide is Small ribosomal subunit protein uS11 (Alcanivorax borkumensis (strain ATCC 700651 / DSM 11573 / NCIMB 13689 / SK2)).